The primary structure comprises 285 residues: Tropomyosin-2 (285 aa).

A coiled-coil region spans residues 1–277; sequence MDAIKKKMQA…KDIGDDLDTA (277 aa). The interval 103-133 is disordered; it reads EERLATATAKLSEASQAADESERARKVLENR. The span at 122–133 shows a compositional bias: basic and acidic residues; it reads ESERARKVLENR.

Belongs to the tropomyosin family. As to quaternary structure, homodimer.

In terms of biological role, tropomyosin, in association with the troponin complex, plays a central role in the calcium dependent regulation of muscle contraction. The chain is Tropomyosin-2 from Bombyx mori (Silk moth).